The following is a 350-amino-acid chain: Biotin synthase (350 aa).

In terms of domain architecture, Radical SAM core spans 38–256; that stretch reads NHVQVSTLLS…IAIARIMMPQ (219 aa). [4Fe-4S] cluster is bound by residues Cys53, Cys57, and Cys60. [2Fe-2S] cluster contacts are provided by Cys97, Cys128, Cys188, and Arg260.

The protein belongs to the radical SAM superfamily. Biotin synthase family. Homodimer. It depends on [4Fe-4S] cluster as a cofactor. Requires [2Fe-2S] cluster as cofactor.

It catalyses the reaction (4R,5S)-dethiobiotin + (sulfur carrier)-SH + 2 reduced [2Fe-2S]-[ferredoxin] + 2 S-adenosyl-L-methionine = (sulfur carrier)-H + biotin + 2 5'-deoxyadenosine + 2 L-methionine + 2 oxidized [2Fe-2S]-[ferredoxin]. It functions in the pathway cofactor biosynthesis; biotin biosynthesis; biotin from 7,8-diaminononanoate: step 2/2. Functionally, catalyzes the conversion of dethiobiotin (DTB) to biotin by the insertion of a sulfur atom into dethiobiotin via a radical-based mechanism. The polypeptide is Biotin synthase (Vibrio parahaemolyticus serotype O3:K6 (strain RIMD 2210633)).